Here is a 120-residue protein sequence, read N- to C-terminus: MGGNVLPIHYDPKTVKQLTKEITVASCIGAAQGALFSIASALLLRRFSSVYRNVRTQVRVFYHCSWISMGAVFRADKQLLKFQTNYYREEQKRREKIMDEAAERGLFLEDESLNSSRSTT.

A helical transmembrane segment spans residues 22 to 44; it reads ITVASCIGAAQGALFSIASALLL. N114 carries N-linked (GlcNAc...) asparagine glycosylation.

The protein resides in the membrane. This is an uncharacterized protein from Saccharomyces cerevisiae (strain ATCC 204508 / S288c) (Baker's yeast).